The primary structure comprises 212 residues: Protein GrpE (212 aa).

Residues 1–69 (MAEMSNNKTS…LESAKKEIES (69 aa)) form a disordered region. Low complexity predominate over residues 40-60 (ETTQTESMETAETETSLQTEL).

The protein belongs to the GrpE family. Homodimer.

The protein resides in the cytoplasm. Its function is as follows. Participates actively in the response to hyperosmotic and heat shock by preventing the aggregation of stress-denatured proteins, in association with DnaK and GrpE. It is the nucleotide exchange factor for DnaK and may function as a thermosensor. Unfolded proteins bind initially to DnaJ; upon interaction with the DnaJ-bound protein, DnaK hydrolyzes its bound ATP, resulting in the formation of a stable complex. GrpE releases ADP from DnaK; ATP binding to DnaK triggers the release of the substrate protein, thus completing the reaction cycle. Several rounds of ATP-dependent interactions between DnaJ, DnaK and GrpE are required for fully efficient folding. The sequence is that of Protein GrpE from Leptospira interrogans serogroup Icterohaemorrhagiae serovar Lai (strain 56601).